We begin with the raw amino-acid sequence, 43 residues long: Cytochrome b559 subunit beta (43 aa).

Residues 18–34 (WLAIHGLAIPTVFFLGG) form a helical membrane-spanning segment. His-22 serves as a coordination point for heme.

Belongs to the PsbE/PsbF family. In terms of assembly, heterodimer of an alpha subunit and a beta subunit. PSII is composed of 1 copy each of membrane proteins PsbA, PsbB, PsbC, PsbD, PsbE, PsbF, PsbH, PsbI, PsbJ, PsbK, PsbL, PsbM, PsbT, PsbX, PsbY, PsbZ, Psb30/Ycf12, at least 3 peripheral proteins of the oxygen-evolving complex and a large number of cofactors. It forms dimeric complexes. Heme b is required as a cofactor.

The protein resides in the plastid. It localises to the chloroplast thylakoid membrane. Its function is as follows. This b-type cytochrome is tightly associated with the reaction center of photosystem II (PSII). PSII is a light-driven water:plastoquinone oxidoreductase that uses light energy to abstract electrons from H(2)O, generating O(2) and a proton gradient subsequently used for ATP formation. It consists of a core antenna complex that captures photons, and an electron transfer chain that converts photonic excitation into a charge separation. The chain is Cytochrome b559 subunit beta from Phaeodactylum tricornutum (strain CCAP 1055/1).